The chain runs to 551 residues: Calcium-dependent protein kinase 3 (551 aa).

The segment at M1–K57 is disordered. G2 carries the N-myristoyl glycine lipid modification. The span at G36–G55 shows a compositional bias: gly residues. A Protein kinase domain is found at Y77 to L335. Residues L83–T91 and K106 contribute to the ATP site. D201 serves as the catalytic Proton acceptor. The segment at A341–I371 is autoinhibitory domain. 4 EF-hand domains span residues E378 to H413, L414 to M449, A450 to G485, and D486 to W521. Residues D391, D393, D395, E402, D427, N429, E438, D463, D465, N467, Y469, E474, D499, D501, D503, K505, and E510 each coordinate Ca(2+).

This sequence belongs to the protein kinase superfamily. Ser/Thr protein kinase family. CDPK subfamily. In terms of tissue distribution, expressed in roots and developing seeds.

Its subcellular location is the membrane. It catalyses the reaction L-seryl-[protein] + ATP = O-phospho-L-seryl-[protein] + ADP + H(+). It carries out the reaction L-threonyl-[protein] + ATP = O-phospho-L-threonyl-[protein] + ADP + H(+). Its activity is regulated as follows. Activated by calcium. Autophosphorylation may play an important role in the regulation of the kinase activity. In terms of biological role, may play a role in signal transduction pathways that involve calcium as a second messenger. The polypeptide is Calcium-dependent protein kinase 3 (Oryza sativa subsp. japonica (Rice)).